Reading from the N-terminus, the 660-residue chain is Arginine--tRNA ligase, cytoplasmic (660 aa).

M1 bears the N-acetylmethionine mark. Residues 1-72 (MDVLVSECSA…QAERNKPTKN (72 aa)) are could be involved in the assembly of the multisynthetase complex. Residues 200 to 202 (SPN), H211, Y384, D388, and Q412 contribute to the L-arginine site. Residues 201-212 (PNIAKEMHVGHL) carry the 'HIGH' region motif. The interval 529-543 (NTAAYLLYAFTRIRS) is interaction with tRNA.

This sequence belongs to the class-I aminoacyl-tRNA synthetase family. As to quaternary structure, interacts (via N-terminus) with AIMP1 (via N-terminus); this stimulates its catalytic activity. Interacts (via N-terminus) with LARS2 (via C-terminus). Monomer. Part of a multisubunit complex that groups tRNA ligases for Arg (RARS1), Asp (DARS1), Gln (QARS1), Ile (IARS1), Leu (LARS1), Lys (KARS1), Met (MARS1) the bifunctional ligase for Glu and Pro (EPRS1) and the auxiliary subunits AIMP1/p43, AIMP2/p38 and EEF1E1/p18. Interacts with QARS1. Part of a complex composed of RARS1, QARS1 and AIMP1.

Its subcellular location is the cytoplasm. It localises to the cytosol. The enzyme catalyses tRNA(Arg) + L-arginine + ATP = L-arginyl-tRNA(Arg) + AMP + diphosphate. Its function is as follows. Forms part of a macromolecular complex that catalyzes the attachment of specific amino acids to cognate tRNAs during protein synthesis. Modulates the secretion of AIMP1 and may be involved in generation of the inflammatory cytokine EMAP2 from AIMP1. The sequence is that of Arginine--tRNA ligase, cytoplasmic from Homo sapiens (Human).